We begin with the raw amino-acid sequence, 168 residues long: Crossover junction endodeoxyribonuclease RuvC (168 aa).

Residues Asp9, Glu70, and Asp145 contribute to the active site. Positions 9, 70, and 145 each coordinate Mg(2+).

This sequence belongs to the RuvC family. In terms of assembly, homodimer which binds Holliday junction (HJ) DNA. The HJ becomes 2-fold symmetrical on binding to RuvC with unstacked arms; it has a different conformation from HJ DNA in complex with RuvA. In the full resolvosome a probable DNA-RuvA(4)-RuvB(12)-RuvC(2) complex forms which resolves the HJ. The cofactor is Mg(2+).

The protein localises to the cytoplasm. The enzyme catalyses Endonucleolytic cleavage at a junction such as a reciprocal single-stranded crossover between two homologous DNA duplexes (Holliday junction).. Functionally, the RuvA-RuvB-RuvC complex processes Holliday junction (HJ) DNA during genetic recombination and DNA repair. Endonuclease that resolves HJ intermediates. Cleaves cruciform DNA by making single-stranded nicks across the HJ at symmetrical positions within the homologous arms, yielding a 5'-phosphate and a 3'-hydroxyl group; requires a central core of homology in the junction. The consensus cleavage sequence is 5'-(A/T)TT(C/G)-3'. Cleavage occurs on the 3'-side of the TT dinucleotide at the point of strand exchange. HJ branch migration catalyzed by RuvA-RuvB allows RuvC to scan DNA until it finds its consensus sequence, where it cleaves and resolves the cruciform DNA. The polypeptide is Crossover junction endodeoxyribonuclease RuvC (Chlamydia caviae (strain ATCC VR-813 / DSM 19441 / 03DC25 / GPIC) (Chlamydophila caviae)).